A 273-amino-acid polypeptide reads, in one-letter code: Glutamate racemase (273 aa).

Substrate-binding positions include 9–10 (DS) and 41–42 (YG). C73 acts as the Proton donor/acceptor in catalysis. 74-75 (NT) is a binding site for substrate. C183 acts as the Proton donor/acceptor in catalysis. 184-185 (TH) contacts substrate.

Belongs to the aspartate/glutamate racemases family.

The catalysed reaction is L-glutamate = D-glutamate. It functions in the pathway cell wall biogenesis; peptidoglycan biosynthesis. Provides the (R)-glutamate required for cell wall biosynthesis. The sequence is that of Glutamate racemase from Shewanella sp. (strain ANA-3).